We begin with the raw amino-acid sequence, 298 residues long: N-acetylmuramic acid 6-phosphate etherase (298 aa).

The SIS domain occupies 55-218 (AANRYKKGGR…STGVMIRQGK (164 aa)). Glutamate 83 functions as the Proton donor in the catalytic mechanism. Glutamate 114 is a catalytic residue.

It belongs to the GCKR-like family. MurNAc-6-P etherase subfamily. In terms of assembly, homodimer.

It carries out the reaction N-acetyl-D-muramate 6-phosphate + H2O = N-acetyl-D-glucosamine 6-phosphate + (R)-lactate. It functions in the pathway amino-sugar metabolism; N-acetylmuramate degradation. Specifically catalyzes the cleavage of the D-lactyl ether substituent of MurNAc 6-phosphate, producing GlcNAc 6-phosphate and D-lactate. The sequence is that of N-acetylmuramic acid 6-phosphate etherase from Lactobacillus acidophilus (strain ATCC 700396 / NCK56 / N2 / NCFM).